A 170-amino-acid chain; its full sequence is Adenine phosphoribosyltransferase (170 aa).

This sequence belongs to the purine/pyrimidine phosphoribosyltransferase family. Homodimer.

It is found in the cytoplasm. The enzyme catalyses AMP + diphosphate = 5-phospho-alpha-D-ribose 1-diphosphate + adenine. The protein operates within purine metabolism; AMP biosynthesis via salvage pathway; AMP from adenine: step 1/1. Functionally, catalyzes a salvage reaction resulting in the formation of AMP, that is energically less costly than de novo synthesis. This is Adenine phosphoribosyltransferase from Cyanothece sp. (strain PCC 7425 / ATCC 29141).